A 940-amino-acid polypeptide reads, in one-letter code: MRDKIVVKGAKVHNLKNVDLQIPRDKFVVFTGLSGSGKSSLAFDTLYAEGQRRYVESLSAYARQFLGQMDKPDVEYIEGLSPAISIDQKTTSKNPRSTVGTVTEIYDYLRLLYARVGKPHCPKCGKEIQQQTVDQMIDKILELPERTRIQVLAPIIKGRKGEHIKVIENIIKGGYVRARIDGEIIDLQEESVKLEKNKKHTIEAVIDRIIIKSDIRSRLADSIEIALKLSEGVVIINVIDKEDILFSENFACIDCGISIDEISPRLFSFNSPFGKCDYCDGLGTLLEIDEKLVIPNKSKSILEGGILPWANTVTNEDSWTFSILKALSKKYNFSLNTPIGELDEEIYNMLLYGIKGERIKVRYKKDGRAVDFNHTFEGLMNTLKRRYMETNSNYMKDNIENYMSDNFCPKCKGARLKPEALAVTLGEKNIFEFCKMSIREELRFLSELMLSNKNKIISNQILKEIESRLQFLIDVGLDYLDLARMAGTLSGGEAQRIRLATQIGSSLVGVLYILDEPSIGLHQRDNDRLIATLKRLRDLGNTLIVVEHDEDTMRAADYIVDIGPGAGEHGGEIVAAGDLKTVMETEGSLTGQYLVGKKKIDIPINRRKSNGKSIIVKEAKENNLKNVDVEFPLGTFTCITGVSGSGKSTLINEILYKGLNKKLNNSKEHPGLHKEILGIENIDKIINIDQSPIGRTPRSNPATYTGVFDGIREVFSNTTESKMRGYKPGRFSFNVKGGRCEACKGDGIIKIEMQFLSDVYVPCEICKGKRYNRETLEVKYKNKNISEILDMTVEESVDFFKNIPKIKNKLQTLMDVGLGYVRLGQPSTQLSGGEAQRIKLASELSKRSTGKTLYILDEPTTGLHIDDVNRLISIIQRLVDGGNTAIIIEHNLDVIKSADYIIDLGPEGGAKGGEVIGIGTPEEISVNIDSYTGHYLKKML.

32–39 contributes to the ATP binding site; sequence GLSGSGKS. The segment at 252 to 279 adopts a C4-type zinc-finger fold; that stretch reads CIDCGISIDEISPRLFSFNSPFGKCDYC. ABC transporter domains are found at residues 309-589 and 609-937; these read WANT…EGSL and SNGK…HYLK. 641 to 648 is an ATP binding site; sequence GVSGSGKS. Residues 740-766 form a C4-type zinc finger; that stretch reads CEACKGDGIIKIEMQFLSDVYVPCEIC.

Belongs to the ABC transporter superfamily. UvrA family. In terms of assembly, forms a heterotetramer with UvrB during the search for lesions.

Its subcellular location is the cytoplasm. Its function is as follows. The UvrABC repair system catalyzes the recognition and processing of DNA lesions. UvrA is an ATPase and a DNA-binding protein. A damage recognition complex composed of 2 UvrA and 2 UvrB subunits scans DNA for abnormalities. When the presence of a lesion has been verified by UvrB, the UvrA molecules dissociate. The chain is UvrABC system protein A from Clostridium tetani (strain Massachusetts / E88).